A 530-amino-acid polypeptide reads, in one-letter code: Ubiquitin carboxyl-terminal hydrolase 17 (530 aa).

The USP domain occupies 80-375; sequence AGLQNMGNTC…QAYVLFYIQK (296 aa). Cys-89 acts as the Nucleophile in catalysis. His-334 (proton acceptor) is an active-site residue. 2 stretches are compositionally biased toward basic and acidic residues: residues 382–392 and 398–413; these read SESVSRGREPR and DTDRRATQGELKRDHP. Disordered regions lie at residues 382–416 and 490–530; these read SESVSRGREPRALGAEDTDRRATQGELKRDHPCLQ and SSTT…LVCQ. The segment at 399–530 is mediates interaction with SUDS3; that stretch reads TDRRATQGEL…HSKRALLVCQ (132 aa). Polar residues predominate over residues 498 to 510; that stretch reads ESVNTGTLASLQG. Over residues 511 to 524 the composition is skewed to basic residues; sequence RTRRSKGKNKHSKR.

This sequence belongs to the peptidase C19 family. USP17 subfamily. As to quaternary structure, interacts with SUDS3; the interaction is direct. In terms of tissue distribution, broadly expressed.

It is found in the nucleus. The protein localises to the endoplasmic reticulum. It catalyses the reaction Thiol-dependent hydrolysis of ester, thioester, amide, peptide and isopeptide bonds formed by the C-terminal Gly of ubiquitin (a 76-residue protein attached to proteins as an intracellular targeting signal).. In terms of biological role, deubiquitinating enzyme that removes conjugated ubiquitin from specific proteins to regulate different cellular processes. Regulates cell proliferation by deubiquitinating and inhibiting RCE1 thereby controlling the small GTPases NRAS and HRAS localization and activation. In parallel, mediates deubiquitination of CDC25A, preventing CDC25A degradation by the proteasome during the G1/S and G2/M phases promoting cell-cycle progression. Also regulates cell proliferation and apoptosis through deubiquitination of SUDS3 a regulator of histone deacetylation. Through activation of the Rho family GTPases RAC1A, CDC42 and RHOA, regulates cell migration. Through the cleavage of 'Lys-48'- and 'Lys-63'-linked polyubiquitin chains of the cytoplasmic innate immune receptors RIGI and IFIH1 stimulates the cellular response to viral infection. This is Ubiquitin carboxyl-terminal hydrolase 17 (USP17L2) from Homo sapiens (Human).